The primary structure comprises 212 residues: External core antigen (212 aa).

An N-terminal signal peptide occupies residues M1–A19. The segment at G25–L27 is HBEAG. The segment at N165–C212 is disordered. Positions V178–S205 are enriched in basic residues. The 1; half-length repeat unit spans residues S184 to P190. The 3 X 8 AA repeats of S-P-R-R-R-R-S-Q stretch occupies residues S184–Q206. A propeptide spanning residues S184–C212 is cleaved from the precursor. A run of 2 repeats spans residues S191–Q198 and S199–Q206.

Belongs to the orthohepadnavirus precore antigen family. Homodimerizes. Phosphorylated. In terms of processing, cleaved by host furin.

It is found in the secreted. Its subcellular location is the host nucleus. In terms of biological role, may regulate immune response to the intracellular capsid in acting as a T-cell tolerogen, by having an immunoregulatory effect which prevents destruction of infected cells by cytotoxic T-cells. This immune regulation may predispose to chronicity during perinatal infections and prevent severe liver injury during adult infections. The polypeptide is External core antigen (Gibbon hepatitis B virus subtype ayw3q (isolate Hope) (HBVgbn)).